The sequence spans 68 residues: Long neurotoxin 1 (68 aa).

5 disulfide bridges follow: C3-C20, C13-C41, C26-C30, C45-C56, and C57-C62.

Belongs to the three-finger toxin family. Long-chain subfamily. Type II alpha-neurotoxin sub-subfamily. As to expression, expressed by the venom gland.

Its subcellular location is the secreted. In terms of biological role, binds with high affinity to muscular (alpha-1/CHRNA1) and neuronal (alpha-7/CHRNA7) nicotinic acetylcholine receptor (nAChR) and inhibits acetylcholine from binding to the receptor, thereby impairing neuromuscular and neuronal transmission. The sequence is that of Long neurotoxin 1 from Aspidelaps scutatus (Shield-nose snake).